The following is a 274-amino-acid chain: Bis(5'-nucleosyl)-tetraphosphatase, symmetrical (274 aa).

It belongs to the Ap4A hydrolase family.

The catalysed reaction is P(1),P(4)-bis(5'-adenosyl) tetraphosphate + H2O = 2 ADP + 2 H(+). Its function is as follows. Hydrolyzes diadenosine 5',5'''-P1,P4-tetraphosphate to yield ADP. This is Bis(5'-nucleosyl)-tetraphosphatase, symmetrical from Shewanella loihica (strain ATCC BAA-1088 / PV-4).